We begin with the raw amino-acid sequence, 459 residues long: Vacuolar amino acid transporter 5 (459 aa).

8 consecutive transmembrane segments (helical) span residues 8–28 (GVLTLLHTACGAGVLAMPFAF), 33–53 (LMPGLITLTFCGICSLCGLLL), 82–102 (VVFDFAIAVKCFGVGVSYLII), 131–151 (FLDRRLYITLIIVFVISPLCF), 161–181 (ASMIAIVSVAYLSGLIIYHFV), 206–226 (LTTLPIFVFAYTCHHNMFSVI), 240–260 (IPIFAIVLAYFLYIIIGGTGY), and 278–298 (SISTTIGRLAMLLLVMLAFPL). Positions 335-351 (FNSEDPQEAPTQQNNEE) are enriched in polar residues. The tract at residues 335–354 (FNSEDPQEAPTQQNNEEPNL) is disordered. The next 3 membrane-spanning stretches (helical) occupy residues 364–384 (IITLCILLFSYLLAISITSLA), 386–406 (VLAIVGATGSTSISFILPGLF), and 434–454 (LSLFIWGIAVMVASLSAIVFL).

Belongs to the amino acid/polyamine transporter 2 family.

The protein localises to the vacuole membrane. In terms of biological role, probable amino acid transporter of unknown specificity. The polypeptide is Vacuolar amino acid transporter 5 (AVT5) (Saccharomyces cerevisiae (strain ATCC 204508 / S288c) (Baker's yeast)).